A 38-amino-acid polypeptide reads, in one-letter code: Photosystem II reaction center protein L (38 aa).

Residues 17-37 (SLYWGLLLIFVLAVLFSNYFF) form a helical membrane-spanning segment.

Belongs to the PsbL family. In terms of assembly, PSII is composed of 1 copy each of membrane proteins PsbA, PsbB, PsbC, PsbD, PsbE, PsbF, PsbH, PsbI, PsbJ, PsbK, PsbL, PsbM, PsbT, PsbX, PsbY, PsbZ, Psb30/Ycf12, at least 3 peripheral proteins of the oxygen-evolving complex and a large number of cofactors. It forms dimeric complexes.

It is found in the plastid. The protein localises to the chloroplast thylakoid membrane. Functionally, one of the components of the core complex of photosystem II (PSII). PSII is a light-driven water:plastoquinone oxidoreductase that uses light energy to abstract electrons from H(2)O, generating O(2) and a proton gradient subsequently used for ATP formation. It consists of a core antenna complex that captures photons, and an electron transfer chain that converts photonic excitation into a charge separation. This subunit is found at the monomer-monomer interface and is required for correct PSII assembly and/or dimerization. The protein is Photosystem II reaction center protein L of Adiantum capillus-veneris (Maidenhair fern).